A 113-amino-acid polypeptide reads, in one-letter code: Gamma-glutamylcyclotransferase family protein YtfP (113 aa).

Belongs to the gamma-glutamylcyclotransferase family.

This is Gamma-glutamylcyclotransferase family protein YtfP (ytfP) from Escherichia coli O157:H7.